We begin with the raw amino-acid sequence, 152 residues long: Transcriptional regulator MraZ (152 aa).

SpoVT-AbrB domains lie at 5–52 (ASAI…PIHE) and 81–124 (AHEV…DEQS).

It belongs to the MraZ family. In terms of assembly, forms oligomers.

Its subcellular location is the cytoplasm. The protein localises to the nucleoid. The sequence is that of Transcriptional regulator MraZ from Shewanella baltica (strain OS223).